A 287-amino-acid chain; its full sequence is Nucleotide-binding protein HEAR2885 (287 aa).

ATP is bound at residue 8–15 (GISGSGKS). 57 to 60 (DVRS) provides a ligand contact to GTP.

Belongs to the RapZ-like family.

Displays ATPase and GTPase activities. This chain is Nucleotide-binding protein HEAR2885, found in Herminiimonas arsenicoxydans.